The following is a 211-amino-acid chain: Protein GrpE (211 aa).

A disordered region spans residues 1-43 (MTDETTKNGPDATAADAAADAAANVEIDNSVQEEAKQPDPLEL). A compositionally biased stretch (low complexity) spans 11-23 (DATAADAAADAAA). Residues 33 to 43 (EEAKQPDPLEL) are compositionally biased toward basic and acidic residues.

It belongs to the GrpE family. As to quaternary structure, homodimer.

Its subcellular location is the cytoplasm. In terms of biological role, participates actively in the response to hyperosmotic and heat shock by preventing the aggregation of stress-denatured proteins, in association with DnaK and GrpE. It is the nucleotide exchange factor for DnaK and may function as a thermosensor. Unfolded proteins bind initially to DnaJ; upon interaction with the DnaJ-bound protein, DnaK hydrolyzes its bound ATP, resulting in the formation of a stable complex. GrpE releases ADP from DnaK; ATP binding to DnaK triggers the release of the substrate protein, thus completing the reaction cycle. Several rounds of ATP-dependent interactions between DnaJ, DnaK and GrpE are required for fully efficient folding. The polypeptide is Protein GrpE (Rhizobium etli (strain ATCC 51251 / DSM 11541 / JCM 21823 / NBRC 15573 / CFN 42)).